A 279-amino-acid chain; its full sequence is Gas vesicle protein L2 (279 aa).

Belongs to the gas vesicle GvpF/GvpL family. GvpF to GvpM interact with each other in vitro, and may form multi-subunit complex(es). Interacts with GvpC, GvpN and GvpO.

Its subcellular location is the gas vesicle. Proteins GvpF to GvpM might be involved in nucleating gas vesicle formation. A minor component of the gas vesicle. Gas vesicles are hollow, gas filled proteinaceous nanostructures found in several microbial planktonic microorganisms. They allow positioning of halobacteria at the optimal depth for growth in the poorly aerated, shallow brine pools of their habitat. Its function is as follows. Expression of 2 c-vac DNA fragments containing 2 divergently transcribed regions (gvpE-gvpF-gvpG-gvpH-gvpI-gvpJ-gvpK-gvpL-gvpM and gvpA-gvpC-gvpN-gvpO) allows H.volcanii to produce gas vesicles. The protein is Gas vesicle protein L2 of Halobacterium salinarum (strain ATCC 700922 / JCM 11081 / NRC-1) (Halobacterium halobium).